An 842-amino-acid chain; its full sequence is Follistatin-related protein 4 (842 aa).

Residues 1 to 22 (MKPGGFWLHLTLLGASLPAALG) form the signal peptide. The Kazal-like domain occupies 81 to 135 (KTGEPECQCLEACRPSYVPVCGSDGRFYENHCKLHRAACLLGKRITVIHSKDCFL). 3 disulfides stabilise this stretch: Cys-87/Cys-119, Cys-93/Cys-112, and Cys-101/Cys-133. Residues 174-209 (QKRLLVESLFRDLDADGNGHLSSSELAQHVLKKQDL) form the EF-hand domain. Ca(2+) contacts are provided by Asp-187, Asp-189, Asn-191, His-193, and Glu-198. Ig-like domains are found at residues 251 to 338 (PEDR…LQVN) and 341 to 426 (PVIR…EDIS). Disulfide bonds link Cys-270/Cys-321 and Cys-362/Cys-413. Asn-318 carries N-linked (GlcNAc...) asparagine glycosylation.

The protein localises to the secreted. This is Follistatin-related protein 4 (FSTL4) from Homo sapiens (Human).